The chain runs to 33 residues: Photosystem II reaction center protein T (33 aa).

A helical transmembrane segment spans residues 3–23 (ALVYTFLLVSTLGIIFFAIFF).

It belongs to the PsbT family. In terms of assembly, PSII is composed of 1 copy each of membrane proteins PsbA, PsbB, PsbC, PsbD, PsbE, PsbF, PsbH, PsbI, PsbJ, PsbK, PsbL, PsbM, PsbT, PsbY, PsbZ, Psb30/Ycf12, at least 3 peripheral proteins of the oxygen-evolving complex and a large number of cofactors. It forms dimeric complexes.

The protein resides in the plastid. The protein localises to the chloroplast thylakoid membrane. Its function is as follows. Found at the monomer-monomer interface of the photosystem II (PS II) dimer, plays a role in assembly and dimerization of PSII. PSII is a light-driven water plastoquinone oxidoreductase, using light energy to abstract electrons from H(2)O, generating a proton gradient subsequently used for ATP formation. In Arabidopsis thaliana (Mouse-ear cress), this protein is Photosystem II reaction center protein T.